Here is a 186-residue protein sequence, read N- to C-terminus: Peptidyl-tRNA hydrolase (186 aa).

Tyr-16 contributes to the tRNA binding site. The active-site Proton acceptor is His-21. Residues Tyr-66, Asn-68, and Asn-114 each coordinate tRNA.

Belongs to the PTH family. In terms of assembly, monomer.

The protein localises to the cytoplasm. The catalysed reaction is an N-acyl-L-alpha-aminoacyl-tRNA + H2O = an N-acyl-L-amino acid + a tRNA + H(+). In terms of biological role, hydrolyzes ribosome-free peptidyl-tRNAs (with 1 or more amino acids incorporated), which drop off the ribosome during protein synthesis, or as a result of ribosome stalling. Its function is as follows. Catalyzes the release of premature peptidyl moieties from peptidyl-tRNA molecules trapped in stalled 50S ribosomal subunits, and thus maintains levels of free tRNAs and 50S ribosomes. This is Peptidyl-tRNA hydrolase from Ureaplasma urealyticum serovar 10 (strain ATCC 33699 / Western).